We begin with the raw amino-acid sequence, 96 residues long: Cysteine protease immunity 1 (96 aa).

The protein is Cysteine protease immunity 1 of Escherichia coli O1:K1:H7 (strain ATCC 11775 / DSM 30083 / JCM 1649 / NBRC 102203 / NCTC 9001 / U5/41).